Consider the following 192-residue polypeptide: Phosphoheptose isomerase (192 aa).

The SIS domain occupies Leu35–Asn192. Asn50–Gly52 is a binding site for substrate. Positions 59 and 63 each coordinate Zn(2+). Substrate is bound by residues Glu63, Asn92–Asp93, Ser118–Ser120, Ser123, and Gln170. Zn(2+)-binding residues include Gln170 and His178.

Belongs to the SIS family. GmhA subfamily. Homotetramer. Zn(2+) is required as a cofactor.

It is found in the cytoplasm. It catalyses the reaction 2 D-sedoheptulose 7-phosphate = D-glycero-alpha-D-manno-heptose 7-phosphate + D-glycero-beta-D-manno-heptose 7-phosphate. The protein operates within carbohydrate biosynthesis; D-glycero-D-manno-heptose 7-phosphate biosynthesis; D-glycero-alpha-D-manno-heptose 7-phosphate and D-glycero-beta-D-manno-heptose 7-phosphate from sedoheptulose 7-phosphate: step 1/1. It participates in bacterial outer membrane biogenesis; LPS core biosynthesis. In terms of biological role, catalyzes the isomerization of sedoheptulose 7-phosphate in D-glycero-D-manno-heptose 7-phosphate. The protein is Phosphoheptose isomerase of Helicobacter pylori (strain ATCC 700392 / 26695) (Campylobacter pylori).